The sequence spans 431 residues: MSRVEAAAAEVKVRQHNALYLLSALCMVFMTLVVAIQPLFLRNVLNISFETAGAVNANVQVVTEVLDLFIFAYLGYLSDRIGRVRIIVAGFLVAAIGAVIAPLSPWIGGASIGALVVYYVSRVIMSAGSGAVWPQLSALAGDFSDDDTRARLMSNTAFMMAFGVTLVYAVLMQIPAHAGIAVTMLLTAAVSLAGAWLAGKFLVDVAPRTQETSVPWRAVWSLVKAEPRLRLAFASSLFARSDMVFVGLFLMLWFIYFADLIKVGQAEAAARAGILIGLMGAVVMLSIPVWRSFIEHFGRIQAVLLGMVLSALGFIMLGFIINPFDWFIVLPILLIASGQAGCFVAPQILTVDYAPRDLLGSVLGAFNVIGCIGIIFFVQVGGFLFDYVGPPAPFVFTGVGNLIISAYALRLLKREARDGGGDDAPGDDGVA.

11 consecutive transmembrane segments (helical) span residues 21 to 41, 57 to 77, 86 to 106, 107 to 127, 156 to 176, 178 to 198, 243 to 263, 274 to 294, 302 to 321, 358 to 378, and 380 to 400; these read LLSA…PLFL, ANVQ…LGYL, IIVA…LSPW, IGGA…IMSA, TAFM…QIPA, AGIA…AWLA, MVFV…LIKV, ILIG…RSFI, AVLL…GFII, LLGS…IFFV, and VGGF…TGVG.

This sequence belongs to the major facilitator superfamily.

Its subcellular location is the magnetosome membrane. Its function is as follows. Required for correct biomineralization of the magnetosome; probably transports some form of iron. Partially functionally redundant with MamZ. The sequence is that of Magnetosome protein MamH (mamH) from Paramagnetospirillum magneticum (strain ATCC 700264 / AMB-1) (Magnetospirillum magneticum).